The primary structure comprises 321 residues: Phospholipid phosphatase-related protein type 5 (321 aa).

6 helical membrane-spanning segments follow: residues 6 to 26, 62 to 82, 122 to 142, 196 to 213, 225 to 245, and 252 to 272; these read VALI…TVML, AVPP…VIIV, FLGI…AGQV, AALS…ITST, VLCL…VAEY, and VIAG…CVVN.

Belongs to the PA-phosphatase related phosphoesterase family.

The protein resides in the cell membrane. Its function is as follows. Induces filopodia formation and promotes neurite growth in a CDC42-independent manner; impedes neurite growth inhibitory-mediated axonal retraction. This is Phospholipid phosphatase-related protein type 5 from Mus musculus (Mouse).